The primary structure comprises 337 residues: uncharacterized protein (337 aa).

Residues 1–10 (MKLKINIRPN) lie on the Cytoplasmic side of the membrane. A helical transmembrane segment spans residues 11–31 (EIIFLICIVVIFSFSYTLTYF). At 32–100 (DSPIFKEHYI…LEKLFSFSDN (69 aa)) the chain is on the extracellular side. The chain crosses the membrane as a helical span at residues 101–121 (ILIVLIIVQVIVGFLIFLLSV). Topologically, residues 122–197 (EKLSKCNYQL…KILIIKKKRD (76 aa)) are cytoplasmic. Over residues 148–167 (NNNNEDINNNNNNNNNNNNK) the composition is skewed to low complexity. The disordered stretch occupies residues 148 to 179 (NNNNEDINNNNNNNNNNNNKNKNDERNNEEIE). Residues 198–218 (ILLAIIIFFLVLLGVLTIIYV) form a helical membrane-spanning segment. The Extracellular segment spans residues 219-285 (SFIPLNIRKA…SWSLDSGLFN (67 aa)). A helical transmembrane segment spans residues 286-306 (VKIVFFSTILIEFLTGCLILL). Topologically, residues 307-337 (MKFKKDPNIVPLTKPSIASPTQIPHLFCIAK) are cytoplasmic.

It localises to the membrane. This is an uncharacterized protein from Dictyostelium discoideum (Social amoeba).